The sequence spans 611 residues: Podocan (611 aa).

Residues 1-23 (MAGSRGLPLLLLVLQLFLGPVLP) form the signal peptide. Residues 60 to 97 (PEPGPATVDCPRDCACSQEGVVDCGGIDLREFPGDLPE) enclose the LRRNT domain. LRR repeat units lie at residues 98–119 (HTNH…ELSR), 122–145 (RLET…AFEH), 148–169 (SLNY…LPNA), 170–190 (LISV…TFGQ), and 193–213 (NLRS…PDHM). Residue Asn-215 is glycosylated (N-linked (GlcNAc...) asparagine). LRR repeat units follow at residues 219–239 (NVEI…HLPP), 240–261 (ALYK…AFSE), 264–284 (NLRE…DNET), 290–311 (SLEY…LPRS), 312–332 (LVLL…VLTP), 335–358 (NLEY…AFQG), 361–382 (KLHT…LPRR), 383–403 (VRTL…DFAT), 406–427 (FLEE…RDAF), 432–453 (LLRS…LPKN), 477–490 (QLRE…RLRS), 503–523 (GLQL…GLPP), 524–545 (SLEY…AFDS), 548–569 (NLKG…ESAF), and 574–583 (HLQVLDIEGN). A glycan (N-linked (GlcNAc...) asparagine) is linked at Asn-282. An N-linked (GlcNAc...) asparagine glycan is attached at Asn-411. Positions 585-611 (EFGNGSKDKDEEEEEEEEEEDEEEETR) are disordered. A compositionally biased stretch (acidic residues) spans 594-611 (DEEEEEEEEEEDEEEETR).

This sequence belongs to the small leucine-rich proteoglycan (SLRP) family. SLRP class V subfamily. In terms of assembly, binds to type I collagen. In terms of processing, N-glycosylated. Kidney. Expressed in podocytes and likely vascular endothelial cells within the glomerulus.

The protein resides in the secreted. The protein localises to the extracellular space. It localises to the extracellular matrix. In terms of biological role, negatively regulates cell proliferation and cell migration, especially in smooth muscle cells. The polypeptide is Podocan (Podn) (Mus musculus (Mouse)).